A 284-amino-acid chain; its full sequence is Formamidopyrimidine-DNA glycosylase (284 aa).

The active-site Schiff-base intermediate with DNA is the proline 2. The Proton donor role is filled by glutamate 3. Lysine 61 acts as the Proton donor; for beta-elimination activity in catalysis. Histidine 95, arginine 114, and arginine 159 together coordinate DNA. An FPG-type zinc finger spans residues 244–278 (WVYGRKGQPCRVCNTPIERIRLAGRSTHFCPTCQR). Arginine 268 (proton donor; for delta-elimination activity) is an active-site residue.

It belongs to the FPG family. As to quaternary structure, monomer. Requires Zn(2+) as cofactor.

The enzyme catalyses Hydrolysis of DNA containing ring-opened 7-methylguanine residues, releasing 2,6-diamino-4-hydroxy-5-(N-methyl)formamidopyrimidine.. The catalysed reaction is 2'-deoxyribonucleotide-(2'-deoxyribose 5'-phosphate)-2'-deoxyribonucleotide-DNA = a 3'-end 2'-deoxyribonucleotide-(2,3-dehydro-2,3-deoxyribose 5'-phosphate)-DNA + a 5'-end 5'-phospho-2'-deoxyribonucleoside-DNA + H(+). Its function is as follows. Involved in base excision repair of DNA damaged by oxidation or by mutagenic agents. Acts as a DNA glycosylase that recognizes and removes damaged bases. Has a preference for oxidized purines, such as 7,8-dihydro-8-oxoguanine (8-oxoG). Has AP (apurinic/apyrimidinic) lyase activity and introduces nicks in the DNA strand. Cleaves the DNA backbone by beta-delta elimination to generate a single-strand break at the site of the removed base with both 3'- and 5'-phosphates. This is Formamidopyrimidine-DNA glycosylase from Gloeobacter violaceus (strain ATCC 29082 / PCC 7421).